The sequence spans 551 residues: Protein PLASTID TRANSCRIPTIONALLY ACTIVE 12, chloroplastic (551 aa).

The transit peptide at 1–47 directs the protein to the chloroplast; sequence MASCSRTWLLPGMAPQATAQTVPRPLQSLKVFAGLPHRRRVLFSGVS. Disordered stretches follow at residues 76–161 and 463–529; these read SSYF…EGES and HSYN…DQLS. The span at 109–119 shows a compositional bias: low complexity; sequence RVRAARAPAPV. Acidic residues-rich tracts occupy residues 467-476 and 485-498; these read EDSDDDEEDA and SLED…DAED. The segment covering 505 to 516 has biased composition (polar residues); sequence RNWSVLKTTGQA. Residues 518-529 are compositionally biased toward basic and acidic residues; sequence NPKEKSKKDQLS.

Component of the plastid-encoded plastid RNA polymerase (PEP) complex.

The protein localises to the plastid. It localises to the chloroplast. Required for the activity of the plastid-encoded RNA polymerase (PEP) and full expression of genes transcribed by PEP. Required for the proper build-up and formation of the PEP-complex. Binds single-stranded (ss) DNA and RNA, but not double-stranded (ds) DNA. This Oryza sativa subsp. japonica (Rice) protein is Protein PLASTID TRANSCRIPTIONALLY ACTIVE 12, chloroplastic.